A 398-amino-acid chain; its full sequence is Pheromone receptor transcription activator (398 aa).

Disordered stretches follow at residues 1–30 (MMDE…YLED), 101–125 (TDQN…ESGY), and 254–317 (PSTG…DRPP). Residues 20 to 74 (GSSQGNSYLEDRQKRQNTFTKRKAGIFKKANELALLTGSEVMVLVVSETGLVHTF) form the MADS-box domain. Residues 106–121 (SQASQAKQSSAQLSDS) are compositionally biased toward low complexity. 2 stretches are compositionally biased toward polar residues: residues 262-273 (TTGQHSVNSPPS) and 282-294 (NKSF…PQTP).

The protein localises to the nucleus. In response to mating-pheromone signaling or nitrogen starvation, it interacts with mat1-Pc. This activates the expression of one of two mating-type-specific genes sxa2 or map3, which leads to inactivation of the P-factor. May also interact with mat1-Mc. The protein is Pheromone receptor transcription activator (map1) of Schizosaccharomyces pombe (strain 972 / ATCC 24843) (Fission yeast).